Reading from the N-terminus, the 248-residue chain is Geranylgeranylglyceryl phosphate synthase (248 aa).

Positions 25 and 50 each coordinate Mg(2+). Sn-glycerol 1-phosphate-binding positions include tyrosine 170–glycine 176, glycine 201–glycine 202, and glycine 223–threonine 224.

Belongs to the GGGP/HepGP synthase family. Group II subfamily. Requires Mg(2+) as cofactor.

The protein localises to the cytoplasm. It carries out the reaction sn-glycerol 1-phosphate + (2E,6E,10E)-geranylgeranyl diphosphate = sn-3-O-(geranylgeranyl)glycerol 1-phosphate + diphosphate. Its pathway is membrane lipid metabolism; glycerophospholipid metabolism. In terms of biological role, prenyltransferase that catalyzes the transfer of the geranylgeranyl moiety of geranylgeranyl diphosphate (GGPP) to the C3 hydroxyl of sn-glycerol-1-phosphate (G1P). This reaction is the first ether-bond-formation step in the biosynthesis of archaeal membrane lipids. This chain is Geranylgeranylglyceryl phosphate synthase, found in Methanococcus aeolicus (strain ATCC BAA-1280 / DSM 17508 / OCM 812 / Nankai-3).